A 193-amino-acid chain; its full sequence is dTTP/UTP pyrophosphatase (193 aa).

Residue Asp-77 is the Proton acceptor of the active site.

It belongs to the Maf family. YhdE subfamily. Requires a divalent metal cation as cofactor.

Its subcellular location is the cytoplasm. It carries out the reaction dTTP + H2O = dTMP + diphosphate + H(+). It catalyses the reaction UTP + H2O = UMP + diphosphate + H(+). Nucleoside triphosphate pyrophosphatase that hydrolyzes dTTP and UTP. May have a dual role in cell division arrest and in preventing the incorporation of modified nucleotides into cellular nucleic acids. This chain is dTTP/UTP pyrophosphatase, found in Parabacteroides distasonis (strain ATCC 8503 / DSM 20701 / CIP 104284 / JCM 5825 / NCTC 11152).